The primary structure comprises 539 residues: Glycerophosphoinositol inositolphosphodiesterase GDPD2 (539 aa).

Topologically, residues 1–38 (MAESPGCCSVWARCLHCLYSCHWRKCPRERMQTSKCDC) are cytoplasmic. A helical membrane pass occupies residues 39–59 (IWFGLLFLTFLLSLSWLYIGL). Topologically, residues 60-85 (VLLNDLHNFNEFLFRRWGHWMDWSLA) are extracellular. A helical transmembrane segment spans residues 86–106 (FLLVISLLVTYASLLLVLALL). Residues 107 to 121 (LRLCRQPLHLHSLHK) are Cytoplasmic-facing. A helical membrane pass occupies residues 122–142 (VLLLLIMLLVAAGLVGLDIQW). At 143–154 (QQEWHSLRVSLQ) the chain is on the extracellular side. A helical membrane pass occupies residues 155-175 (ATAPFLHIGAAAGIALLAWPV). Residues 176–188 (ADTFYRIHRRGPK) lie on the Cytoplasmic side of the membrane. A helical transmembrane segment spans residues 189–209 (ILLLLLFFGVVLVIYLAPLCI). The Extracellular portion of the chain corresponds to 210–490 (SSPCIMEPRD…PIWLITPQTY (281 aa)). A GP-PDE domain is found at 224 to 479 (PGLVGHRGAP…NDCQLLQQMR (256 aa)). 3 residues coordinate a divalent metal cation: E256, D258, and H271. N-linked (GlcNAc...) asparagine glycosylation is present at N442. Residues 491–511 (LIIWVITNCVSTMLLLWTFLL) form a helical membrane-spanning segment. Topologically, residues 512 to 539 (QRRFVKKRGKTGLETAVLLTRINNFMME) are cytoplasmic.

Belongs to the glycerophosphoryl diester phosphodiesterase family. Ca(2+) is required as a cofactor.

The protein localises to the cell membrane. The protein resides in the cytoplasm. It is found in the cytoskeleton. The catalysed reaction is sn-glycero-3-phospho-1D-myo-inositol + H2O = 1D-myo-inositol 1-phosphate + glycerol + H(+). Has glycerophosphoinositol inositolphosphodiesterase activity and specifically hydrolyzes glycerophosphoinositol, with no activity for other substrates such as glycerophosphoinositol 4-phosphate, glycerophosphocholine, glycerophosphoethanolamine, and glycerophosphoserine. Accelerates the program of osteoblast differentiation and growth. May play a role in remodeling of the actin cytoskeleton. The polypeptide is Glycerophosphoinositol inositolphosphodiesterase GDPD2 (GDPD2) (Homo sapiens (Human)).